Here is a 540-residue protein sequence, read N- to C-terminus: Testis-specific chromodomain protein Y 1 (540 aa).

The Chromo domain maps to 6–66 (FEVEAIVDKR…RQTEKQKKLT (61 aa)). Residues 76–106 (NNARRRTSRSTKANYSKNSPKTPVTDKHHRS) form a disordered region. The span at 87–97 (KANYSKNSPKT) shows a compositional bias: polar residues.

Interacts (via chromo domain) with histone H3K9me3. Testis-specific. Detected in spermatids (at protein level).

It is found in the nucleus. The enzyme catalyses L-lysyl-[protein] + acetyl-CoA = N(6)-acetyl-L-lysyl-[protein] + CoA + H(+). Functionally, has histone acetyltransferase activity, with a preference for histone H4. The polypeptide is Testis-specific chromodomain protein Y 1 (CDY1) (Homo sapiens (Human)).